A 245-amino-acid chain; its full sequence is 14-3-3 protein zeta/delta (245 aa).

Methionine 1 bears the N-acetylmethionine mark. At lysine 3 the chain carries N6-acetyllysine. Serine 58 is modified (phosphoserine; by PKA). Lysine 68 bears the N6-acetyllysine mark. Phosphoserine occurs at positions 184, 207, and 210. Threonine 232 is modified (phosphothreonine; by CK1).

The protein belongs to the 14-3-3 family. Interacts with CDK16 and BSPRY. Interacts with WEE1 (C-terminal). Interacts with SAMSN1. Interacts with MLF1 (phosphorylated form); the interaction retains it in the cytoplasm. Interacts with Thr-phosphorylated ITGB2. Interacts with BCL2L11. Homodimer. Heterodimerizes with YWHAE. Homo- and heterodimerization is inhibited by phosphorylation on Ser-58. Interacts with FOXO4, NOXA1, SSH1 and ARHGEF2. Interacts with Pseudomonas aeruginosa exoS (unphosphorylated form). Interacts with BAX; the interaction occurs in the cytoplasm. Under stress conditions, MAPK8-mediated phosphorylation releases BAX to mitochondria. Interacts with phosphorylated RAF1; the interaction is inhibited when YWHAZ is phosphorylated on Thr-232. Interacts with TP53; the interaction enhances p53 transcriptional activity. The Ser-58 phosphorylated form inhibits this interaction and p53 transcriptional activity. Interacts with ABL1 (phosphorylated form); the interaction retains ABL1 in the cytoplasm. Interacts with PKA-phosphorylated AANAT; the interaction modulates AANAT enzymatic activity by increasing affinity for arylalkylamines and acetyl-CoA and protecting the enzyme from dephosphorylation and proteasomal degradation. It may also prevent thiol-dependent inactivation. Interacts with AKT1; the interaction phosphorylates YWHAZ and modulates dimerization. Interacts with GAB2 and TLK2. Interacts with the 'Thr-369' phosphorylated form of DAPK2. Interacts with PI4KB, TBC1D22A and TBC1D22B. Interacts with ZFP36L1 (via phosphorylated form); this interaction occurs in a p38 MAPK- and AKT-signaling pathways. Interacts with SLITRK1. Interacts with AK5, LDB1, MADD, MARK3, PDE1A and SMARCB1. Interacts with YWHAZ. Interacts with MEFV. Interacts with ADAM22 (via C-terminus). The delta, brain-specific form differs from the zeta form in being phosphorylated. Phosphorylation on Ser-184 by MAPK8; promotes dissociation of BAX and translocation of BAX to mitochondria. Phosphorylation on Thr-232; inhibits binding of RAF1. Phosphorylated on Ser-58 by PKA and protein kinase C delta type catalytic subunit in a sphingosine-dependent fashion. Phosphorylation on Ser-58 by PKA; disrupts homodimerization and heterodimerization with YHAE and TP53. In terms of tissue distribution, highly expressed in brain (at protein level).

It localises to the cytoplasm. The protein localises to the melanosome. Functionally, adapter protein implicated in the regulation of a large spectrum of both general and specialized signaling pathways. Binds to a large number of partners, usually by recognition of a phosphoserine or phosphothreonine motif. Binding generally results in the modulation of the activity of the binding partner. Promotes cytosolic retention and inactivation of TFEB transcription factor by binding to phosphorylated TFEB. Induces ARHGEF7 activity on RAC1 as well as lamellipodia and membrane ruffle formation. In neurons, regulates spine maturation through the modulation of ARHGEF7 activity. The protein is 14-3-3 protein zeta/delta (YWHAZ) of Ovis aries (Sheep).